The chain runs to 175 residues: Ribosome maturation factor RimM (175 aa).

A PRC barrel domain is found at 98 to 175 (EGEYYWHQLE…EMRVDWDADF (78 aa)).

It belongs to the RimM family. In terms of assembly, binds ribosomal protein uS19.

The protein localises to the cytoplasm. An accessory protein needed during the final step in the assembly of 30S ribosomal subunit, possibly for assembly of the head region. Essential for efficient processing of 16S rRNA. May be needed both before and after RbfA during the maturation of 16S rRNA. It has affinity for free ribosomal 30S subunits but not for 70S ribosomes. This chain is Ribosome maturation factor RimM, found in Pseudomonas aeruginosa (strain ATCC 15692 / DSM 22644 / CIP 104116 / JCM 14847 / LMG 12228 / 1C / PRS 101 / PAO1).